A 412-amino-acid polypeptide reads, in one-letter code: [Pyruvate dehydrogenase (acetyl-transferring)] kinase isozyme 4, mitochondrial (412 aa).

A Histidine kinase domain is found at 138-368; sequence ILEYKDNCTV…DAIIYLKALS (231 aa). Residues 254 to 261, Asp-293, 312 to 313, and 329 to 334 contribute to the ATP site; these read ELFKNAMR, ST, and GFGYGL.

Belongs to the PDK/BCKDK protein kinase family. In terms of assembly, homodimer. Interacts with the pyruvate dehydrogenase complex subunit DLAT, and is part of the multimeric pyruvate dehydrogenase complex that contains multiple copies of pyruvate dehydrogenase (E1), dihydrolipoamide acetyltransferase (DLAT, E2) and lipoamide dehydrogenase (DLD, E3). As to expression, ubiquitous; highest levels of expression in heart and skeletal muscle.

Its subcellular location is the mitochondrion matrix. It catalyses the reaction L-seryl-[pyruvate dehydrogenase E1 alpha subunit] + ATP = O-phospho-L-seryl-[pyruvate dehydrogenase E1 alpha subunit] + ADP + H(+). Kinase that plays a key role in regulation of glucose and fatty acid metabolism and homeostasis via phosphorylation of the pyruvate dehydrogenase subunits PDHA1 and PDHA2. This inhibits pyruvate dehydrogenase activity, and thereby regulates metabolite flux through the tricarboxylic acid cycle, down-regulates aerobic respiration and inhibits the formation of acetyl-coenzyme A from pyruvate. Inhibition of pyruvate dehydrogenase decreases glucose utilization and increases fat metabolism in response to prolonged fasting and starvation. Plays an important role in maintaining normal blood glucose levels under starvation, and is involved in the insulin signaling cascade. Via its regulation of pyruvate dehydrogenase activity, plays an important role in maintaining normal blood pH and in preventing the accumulation of ketone bodies under starvation. In the fed state, mediates cellular responses to glucose levels and to a high-fat diet. Regulates both fatty acid oxidation and de novo fatty acid biosynthesis. Plays a role in the generation of reactive oxygen species. Protects detached epithelial cells against anoikis. Plays a role in cell proliferation via its role in regulating carbohydrate and fatty acid metabolism. The protein is [Pyruvate dehydrogenase (acetyl-transferring)] kinase isozyme 4, mitochondrial (Pdk4) of Rattus norvegicus (Rat).